Here is a 172-residue protein sequence, read N- to C-terminus: Small ribosomal subunit protein uS5 (172 aa).

The S5 DRBM domain occupies 13 to 76; that stretch reads LIEKMVAVNR…DQARRSMIKV (64 aa).

This sequence belongs to the universal ribosomal protein uS5 family. As to quaternary structure, part of the 30S ribosomal subunit. Contacts proteins S4 and S8.

In terms of biological role, with S4 and S12 plays an important role in translational accuracy. Functionally, located at the back of the 30S subunit body where it stabilizes the conformation of the head with respect to the body. This chain is Small ribosomal subunit protein uS5, found in Neisseria gonorrhoeae (strain ATCC 700825 / FA 1090).